The primary structure comprises 474 residues: tRNA-2-methylthio-N(6)-dimethylallyladenosine synthase (474 aa).

The MTTase N-terminal domain maps to 3 to 120 (KKLHIKTWGC…LPEMINSVRG (118 aa)). [4Fe-4S] cluster is bound by residues C12, C49, C83, C157, C161, and C164. The Radical SAM core domain maps to 143-375 (RAEGPTAFVS…QERINQQAMA (233 aa)). One can recognise a TRAM domain in the interval 378–441 (RRMLGTVQRI…TNSLRGKIVR (64 aa)).

It belongs to the methylthiotransferase family. MiaB subfamily. In terms of assembly, monomer. [4Fe-4S] cluster is required as a cofactor.

The protein resides in the cytoplasm. It catalyses the reaction N(6)-dimethylallyladenosine(37) in tRNA + (sulfur carrier)-SH + AH2 + 2 S-adenosyl-L-methionine = 2-methylsulfanyl-N(6)-dimethylallyladenosine(37) in tRNA + (sulfur carrier)-H + 5'-deoxyadenosine + L-methionine + A + S-adenosyl-L-homocysteine + 2 H(+). In terms of biological role, catalyzes the methylthiolation of N6-(dimethylallyl)adenosine (i(6)A), leading to the formation of 2-methylthio-N6-(dimethylallyl)adenosine (ms(2)i(6)A) at position 37 in tRNAs that read codons beginning with uridine. The polypeptide is tRNA-2-methylthio-N(6)-dimethylallyladenosine synthase (Klebsiella pneumoniae subsp. pneumoniae (strain ATCC 700721 / MGH 78578)).